A 340-amino-acid polypeptide reads, in one-letter code: Ketol-acid reductoisomerase (NADP(+)) (340 aa).

Residues 3–183 form the KARI N-terminal Rossmann domain; the sequence is LPIYYDKDCD…GGGRTGIIHT (181 aa). NADP(+) is bound by residues 26–29, Ser54, and 84–87; these read FGSQ and DEIQ. The active site involves His109. An NADP(+)-binding site is contributed by Gly135. Positions 184–329 constitute a KARI C-terminal knotted domain; that stretch reads TFKDETETDL…KRLRAMMPWI (146 aa). Asp192, Glu196, Glu228, and Glu232 together coordinate Mg(2+). Ser253 is a binding site for substrate.

This sequence belongs to the ketol-acid reductoisomerase family. Mg(2+) is required as a cofactor.

It catalyses the reaction (2R)-2,3-dihydroxy-3-methylbutanoate + NADP(+) = (2S)-2-acetolactate + NADPH + H(+). It carries out the reaction (2R,3R)-2,3-dihydroxy-3-methylpentanoate + NADP(+) = (S)-2-ethyl-2-hydroxy-3-oxobutanoate + NADPH + H(+). The protein operates within amino-acid biosynthesis; L-isoleucine biosynthesis; L-isoleucine from 2-oxobutanoate: step 2/4. Its pathway is amino-acid biosynthesis; L-valine biosynthesis; L-valine from pyruvate: step 2/4. In terms of biological role, involved in the biosynthesis of branched-chain amino acids (BCAA). Catalyzes an alkyl-migration followed by a ketol-acid reduction of (S)-2-acetolactate (S2AL) to yield (R)-2,3-dihydroxy-isovalerate. In the isomerase reaction, S2AL is rearranged via a Mg-dependent methyl migration to produce 3-hydroxy-3-methyl-2-ketobutyrate (HMKB). In the reductase reaction, this 2-ketoacid undergoes a metal-dependent reduction by NADPH to yield (R)-2,3-dihydroxy-isovalerate. This is Ketol-acid reductoisomerase (NADP(+)) from Nitratiruptor sp. (strain SB155-2).